Consider the following 268-residue polypeptide: MMSDTLRAVLLGIIEGVTEFLPVSSTGHLLLAERFFGLGEDGFWKSFAILIQLGAILAIVALYFFKLSRVAIGALSNADDRRFIIGVLIAFLPAVIIGLIAGKYIKALLFDPWVVCFSLIVGGAILLWVDQIDLKPREHDATRYPLLMYLWIGVAQCLAMIPGVSRSGATIVAAMLLGGDKRSAAEFSFFLAIPTMVGAFVYDFYKSRAEMTSDHLGLVAIGFVVSFITAMIVVKAFLGYVTRHGFVLFAWWRVIVGTLGLIALALGK.

7 consecutive transmembrane segments (helical) span residues F47–L67, F83–K103, L109–V129, Y144–V164, A184–F204, L218–L238, and F246–L266.

This sequence belongs to the UppP family.

It is found in the cell inner membrane. It carries out the reaction di-trans,octa-cis-undecaprenyl diphosphate + H2O = di-trans,octa-cis-undecaprenyl phosphate + phosphate + H(+). Functionally, catalyzes the dephosphorylation of undecaprenyl diphosphate (UPP). Confers resistance to bacitracin. The protein is Undecaprenyl-diphosphatase of Bradyrhizobium sp. (strain BTAi1 / ATCC BAA-1182).